A 278-amino-acid polypeptide reads, in one-letter code: NAD kinase (278 aa).

The Proton acceptor role is filled by Asp56. NAD(+) contacts are provided by residues 56 to 57, 132 to 133, Arg158, Asp160, and 171 to 176; these read DG, NE, and TAYNKS.

Belongs to the NAD kinase family. Requires a divalent metal cation as cofactor.

Its subcellular location is the cytoplasm. It catalyses the reaction NAD(+) + ATP = ADP + NADP(+) + H(+). In terms of biological role, involved in the regulation of the intracellular balance of NAD and NADP, and is a key enzyme in the biosynthesis of NADP. Catalyzes specifically the phosphorylation on 2'-hydroxyl of the adenosine moiety of NAD to yield NADP. The polypeptide is NAD kinase (Streptococcus agalactiae serotype V (strain ATCC BAA-611 / 2603 V/R)).